Here is a 151-residue protein sequence, read N- to C-terminus: MPLYEHVFLARQDVTAQQVETMVETYKGVIETGGGTIEKIESWGVKSLAYRIKKNRKAHFTLLNISAPPAAVAEMERQMQISEDVLRFMTVRVEQLEAEPSAMMQKRDRDDRKDRDRGDRPRRRDDDFGGGDRGDRGDRGDRPERNFGGEN.

The interval 97–151 (EAEPSAMMQKRDRDDRKDRDRGDRPRRRDDDFGGGDRGDRGDRGDRPERNFGGEN) is disordered. Residues 105–151 (QKRDRDDRKDRDRGDRPRRRDDDFGGGDRGDRGDRGDRPERNFGGEN) show a composition bias toward basic and acidic residues.

This sequence belongs to the bacterial ribosomal protein bS6 family.

Its function is as follows. Binds together with bS18 to 16S ribosomal RNA. The chain is Small ribosomal subunit protein bS6 from Methylorubrum extorquens (strain CM4 / NCIMB 13688) (Methylobacterium extorquens).